Here is a 785-residue protein sequence, read N- to C-terminus: Endonuclease MutS2 (785 aa).

334–341 (GPNTGGKT) contributes to the ATP binding site. A Smr domain is found at 710–785 (LDLRGQRYDE…GNGATIVKLK (76 aa)).

This sequence belongs to the DNA mismatch repair MutS family. MutS2 subfamily. As to quaternary structure, homodimer. Binds to stalled ribosomes, contacting rRNA.

In terms of biological role, endonuclease that is involved in the suppression of homologous recombination and thus may have a key role in the control of bacterial genetic diversity. Acts as a ribosome collision sensor, splitting the ribosome into its 2 subunits. Detects stalled/collided 70S ribosomes which it binds and splits by an ATP-hydrolysis driven conformational change. Acts upstream of the ribosome quality control system (RQC), a ribosome-associated complex that mediates the extraction of incompletely synthesized nascent chains from stalled ribosomes and their subsequent degradation. Probably generates substrates for RQC. This is Endonuclease MutS2 from Lactobacillus helveticus (strain DPC 4571).